We begin with the raw amino-acid sequence, 212 residues long: Large ribosomal subunit protein uL3 (212 aa).

Gln-153 carries the N5-methylglutamine modification.

This sequence belongs to the universal ribosomal protein uL3 family. In terms of assembly, part of the 50S ribosomal subunit. Forms a cluster with proteins L14 and L19. Methylated by PrmB.

Its function is as follows. One of the primary rRNA binding proteins, it binds directly near the 3'-end of the 23S rRNA, where it nucleates assembly of the 50S subunit. The protein is Large ribosomal subunit protein uL3 of Shewanella piezotolerans (strain WP3 / JCM 13877).